The chain runs to 208 residues: Cysteine-rich protein 2 (208 aa).

The LIM zinc-binding 1 domain maps to 5-57 (CPKCDKTVYFAEKVSSLGKDWHKFCLKCERCSKTLTPGGHAEHDGKPFCHKPC). Position 23 is an N6-acetyllysine (K23). The tract at residues 98-119 (AEERKASGPPKGPSRASSVTTF) is disordered. Residue S104 is modified to Phosphoserine. In terms of domain architecture, LIM zinc-binding 2 spans 126-178 (CPRCSKKVYFAEKVTSLGKDWHRPCLRCERCGKTLTPGGHAEHDGQPYCHKPC). 2 positions are modified to N6-acetyllysine: K138 and K144.

As to quaternary structure, interacts with TGFB1I1. As to expression, widespread tissue expression; highest levels in the heart.

This Homo sapiens (Human) protein is Cysteine-rich protein 2 (CRIP2).